The following is a 278-amino-acid chain: S-formylglutathione hydrolase YeiG (278 aa).

Residues serine 145, aspartate 223, and histidine 256 each act as charge relay system in the active site.

It belongs to the esterase D family.

The catalysed reaction is S-formylglutathione + H2O = formate + glutathione + H(+). In terms of biological role, serine hydrolase involved in the detoxification of formaldehyde. Hydrolyzes S-formylglutathione to glutathione and formate. The sequence is that of S-formylglutathione hydrolase YeiG (yeiG) from Shigella boydii serotype 4 (strain Sb227).